The sequence spans 375 residues: DNA replication and repair protein RecF (375 aa).

30 to 37 (GNNAQGKS) is an ATP binding site.

The protein belongs to the RecF family.

The protein resides in the cytoplasm. Functionally, the RecF protein is involved in DNA metabolism; it is required for DNA replication and normal SOS inducibility. RecF binds preferentially to single-stranded, linear DNA. It also seems to bind ATP. The sequence is that of DNA replication and repair protein RecF from Microcystis aeruginosa (strain NIES-843 / IAM M-2473).